We begin with the raw amino-acid sequence, 364 residues long: MGSAKSAMLILLVAMVIASCATAIDMSVVSYDDNNRLHSVFDAEASLIFESWMVKHGKVYGSVAEKERRLTIFEDNLRFINNRNAENLSYRLGLTGFADLSLHEYKEVCHGADPRPPRNHVFMTSSDRYKTSADDVLPKSVDWRNEGAVTEVKDQGHCRSCWAFSTVGAVEGLNKIVTGELVTLSEQDLINCNKENNGCGGGKLETAYEFIMKNGGLGTDNDYPYKAVNGVCDGRLKENNKNVMIDGYENLPANDESALMKAVAHQPVTAVIDSSSREFQLYESGVFDGSCGTNLNHGVVVVGYGTENGRDYWLVKNSRGITWGEAGYMKMARNIANPRGLCGIAMRASYPLKNSFSTDKSSIA.

A signal peptide spans 1–23 (MGSAKSAMLILLVAMVIASCATA). The propeptide at 24–136 (IDMSVVSYDD…DRYKTSADDV (113 aa)) is activation peptide. An N-linked (GlcNAc...) asparagine glycan is attached at asparagine 87. Cystine bridges form between cysteine 158–cysteine 199, cysteine 192–cysteine 232, and cysteine 291–cysteine 342. Residue cysteine 161 is part of the active site. Residues histidine 297 and asparagine 317 contribute to the active site.

Belongs to the peptidase C1 family. Expressed in inflorescences.

Its function is as follows. Probable thiol protease. This chain is Probable cysteine protease RDL4, found in Arabidopsis thaliana (Mouse-ear cress).